The following is a 155-amino-acid chain: Small ribosomal subunit protein uS7c (155 aa).

It belongs to the universal ribosomal protein uS7 family. As to quaternary structure, part of the 30S ribosomal subunit.

It localises to the plastid. It is found in the chloroplast. Its function is as follows. One of the primary rRNA binding proteins, it binds directly to 16S rRNA where it nucleates assembly of the head domain of the 30S subunit. The polypeptide is Small ribosomal subunit protein uS7c (rps7) (Allium textile (Textile onion)).